Reading from the N-terminus, the 246-residue chain is Probable transcriptional regulatory protein APJL_1171 (246 aa).

Belongs to the TACO1 family.

Its subcellular location is the cytoplasm. This is Probable transcriptional regulatory protein APJL_1171 from Actinobacillus pleuropneumoniae serotype 3 (strain JL03).